We begin with the raw amino-acid sequence, 335 residues long: Pyridoxal 5'-phosphate synthase subunit PdxS (335 aa).

Residue Asp-30 participates in D-ribose 5-phosphate binding. Lys-87 acts as the Schiff-base intermediate with D-ribose 5-phosphate in catalysis. Gly-159 provides a ligand contact to D-ribose 5-phosphate. A D-glyceraldehyde 3-phosphate-binding site is contributed by Arg-171. Residues Gly-257 and 278–279 contribute to the D-ribose 5-phosphate site; that span reads GS.

This sequence belongs to the PdxS/SNZ family. In the presence of PdxT, forms a dodecamer of heterodimers.

The catalysed reaction is aldehydo-D-ribose 5-phosphate + D-glyceraldehyde 3-phosphate + L-glutamine = pyridoxal 5'-phosphate + L-glutamate + phosphate + 3 H2O + H(+). Its pathway is cofactor biosynthesis; pyridoxal 5'-phosphate biosynthesis. Catalyzes the formation of pyridoxal 5'-phosphate from ribose 5-phosphate (RBP), glyceraldehyde 3-phosphate (G3P) and ammonia. The ammonia is provided by the PdxT subunit. Can also use ribulose 5-phosphate and dihydroxyacetone phosphate as substrates, resulting from enzyme-catalyzed isomerization of RBP and G3P, respectively. This Thermococcus kodakarensis (strain ATCC BAA-918 / JCM 12380 / KOD1) (Pyrococcus kodakaraensis (strain KOD1)) protein is Pyridoxal 5'-phosphate synthase subunit PdxS.